Reading from the N-terminus, the 1091-residue chain is E3 ubiquitin-protein ligase TRIM33 (1091 aa).

Residues 1–13 (MADNKGGGGGGGE) show a composition bias toward gly residues. The segment at 1-87 (MADNKGGGGG…SATPASSSSS (87 aa)) is disordered. The span at 52–87 (APVAAVPTDTPAEENPAPSSSSVASSSATPASSSSS) shows a compositional bias: low complexity. The RING-type 1 zinc finger occupies 97-154 (CAVCKLSLQSRDTEPKLLPCLHSFCRRCLPEPERQLSVPGGTNGDIQQVGVIRCLVCR). The segment at 180 to 227 (KSEQVCTSCEDNASAVGFCVECGEWLCKTCIEAHQRVKFTKDHIITNK) adopts a B box-type 1; atypical zinc-finger fold. Zn(2+) contacts are provided by Cys-185, Cys-188, Cys-209, His-213, Cys-245, His-248, Cys-268, and His-273. Residues 240–281 (QRPVFCPVHKQEQLKLFCETCDRLTCRDCQLLEHKEHRYQFL) form a B box-type 2 zinc finger. A coiled-coil region spans residues 269–361 (QLLEHKEHRY…QLESVTKERQ (93 aa)). Disordered stretches follow at residues 672–779 (LPQP…TPPL) and 821–844 (GKSA…GSNK). Residues 675-721 (PTSNMNPSPAPSAMSPGSTGLSNSHTPVRPPSTSSTGSRGSCGSSSR) are compositionally biased toward low complexity. Over residues 754 to 763 (KQEKAEDGRR) the composition is skewed to basic and acidic residues. Residues 768–779 (LSSPESSLTPPL) show a composition bias toward low complexity. A PHD-type zinc finger spans residues 850–897 (EDWCAVCQNGGDLLCCEKCPKVFHLTCHVPTLLSFPSGEWICTFCRDL). In terms of domain architecture, Bromo spans 920–1043 (GLSPVDQMKC…LYFEEKLPAI (124 aa)). The segment at 1051-1091 (PLPEFEAEDDDGDVTDDSDDDDFVQPRRKRLKSEERPVHIK) is disordered. Residues 1055 to 1073 (FEAEDDDGDVTDDSDDDDF) show a composition bias toward acidic residues. Residues 1082–1091 (KSEERPVHIK) show a composition bias toward basic and acidic residues.

As to quaternary structure, may interact with smad4.

The protein localises to the nucleus. It catalyses the reaction S-ubiquitinyl-[E2 ubiquitin-conjugating enzyme]-L-cysteine + [acceptor protein]-L-lysine = [E2 ubiquitin-conjugating enzyme]-L-cysteine + N(6)-ubiquitinyl-[acceptor protein]-L-lysine.. The protein operates within protein modification; protein ubiquitination. Its function is as follows. Acts as an E3 ubiquitin-protein ligase for smad4. Promotes ectoderm embryonic development at the expense of other germ layers. Inhibits mesodermal differentiation. Promotes neural development of the ectoderm. Promotes smad4 alpha degradation via the ubiquitin proteasome pathway. May act as a transcriptional repressor. This Xenopus laevis (African clawed frog) protein is E3 ubiquitin-protein ligase TRIM33 (trim33).